A 1376-amino-acid chain; its full sequence is MAERANLVFHNKVIDGTAIKRLISRLIDHFGMAYTSHILDQVKTLGFQQATATSISLGIDDLLTIPSKGWLVQDAEQQSWILEKHHHYGNVHAVEKLRQSIEIWYATSEYLRQEMNPNFRMTDPFNPVHMMSFSGARGNASQVHQLVGMRGLMSDPQGQMIDLPIQSNLREGLSLTEYIISCYGARKGVVDTAVRTSDAGYLTRRLVEVVQHIVVRRTDCGTIRGISVSPRNKNRMMSERIFIQTLIGRVLADDIYIGSRCVAFRNQDLGIGLVNRLITFGTQSISIRTPFTCRSTSWICRLCYGRSPTHGDLVELGEAVGIIAGQSIGEPGTQLTLRTFHTGGVFTGGTAEHVRAPYNGKIKFNEDLVHPTRTRHGHPAFLCYIDLSVIIESEDIIHSVTIPPKSFLLVQNDQYVESEQVIAEIREGTYTFHFKERVRKYIYSDSEGEMHWSTDVSHAPEFTYSNVHLLPKTSHLWILSGGSCGSSLIRFSIHKDQDQMNIPFLSAERKSISSLSVNNDQVSQKFFSSDFADPKKLGIYDYSELNGNLGTSHYNLIYSAIFHENSDLLAKRRRNRFLIPFQSIQEQEKEFIPQSGISVEIPINGIFRRNSIFAFFDDPRYRRKSSGILKYGTLKADSIIQKEDMIEYRGVQKIKTKYEMKVDRFFFIPEEVHILPESSAIMVQNYSIIGVDTRLTLNIRSQVGGLIRVEKKKKRIELKIFSGDIHFPDKTDKISRHSGILIPPGRGKKNSKESKKFKNWIYVQRITPTKKKFFVLVRPVATYEIADSINLATLFPQDLFREKDNIQLRVFNYILYGNGKPTRGISDTSIQLVRTCLVLNWDKNSSLEEVRAFFVEVSTKGLIQDFIRIGLVKSHISYIRKRNNSPDSGLISADHMNPFYSISPKSGILQQSLRQNHGTIRMFLNRNKESQSLLILSSSNCFRMGPFNHVKHHNVINQSIKKNTLITIKNSSGPLGTATPISNFYSFLPLLTYNQISLIKYFQLDNLKYIFQKINSYLIDENGIILNLDPYSNVVLNPFKLNWYFLHQNYHHNYCEETSTIISLGQFFCENVCIAKKEPHLKSGQVLIVQRDSAVIRSAKPYLATPGAKVHGHYSEILYEGDTLVTFIYEKSRSGDITQGLPKVEQVLEVRSIDSISLNLEKRIKGWNKCITRILGIPWGFLIGAELTIVQSRISLVNKIQKVYRSQGVQIHNRHIEIIVRQITSKVLVSEEGMSNVFLPGELIGLLRAERTGRALEEAICYRAVLLGITRASLNTQSFISEASFQETARVLAKAALRGRIDWLKGLKENVVLGGVIPAGTGFNKGLVHCSRQHTNIILEKKTKNLALFEGDMRDILFYHREFCDSSISKSDFSRI.

4 residues coordinate Zn(2+): Cys220, Cys293, Cys300, and Cys303.

It belongs to the RNA polymerase beta' chain family. RpoC2 subfamily. In plastids the minimal PEP RNA polymerase catalytic core is composed of four subunits: alpha, beta, beta', and beta''. When a (nuclear-encoded) sigma factor is associated with the core the holoenzyme is formed, which can initiate transcription. Zn(2+) is required as a cofactor.

Its subcellular location is the plastid. The protein localises to the chloroplast. The catalysed reaction is RNA(n) + a ribonucleoside 5'-triphosphate = RNA(n+1) + diphosphate. In terms of biological role, DNA-dependent RNA polymerase catalyzes the transcription of DNA into RNA using the four ribonucleoside triphosphates as substrates. This Arabidopsis thaliana (Mouse-ear cress) protein is DNA-directed RNA polymerase subunit beta''.